Consider the following 406-residue polypeptide: L-methionine gamma-lyase (406 aa).

Residues Tyr-76 to Arg-78 and Gly-106 to Met-107 each bind pyridoxal 5'-phosphate. Tyr-132 contributes to the L-homocysteine binding site. Residue Ser-219–Thr-221 coordinates pyridoxal 5'-phosphate. The residue at position 222 (Lys-222) is an N6-(pyridoxal phosphate)lysine. Arg-380 contributes to the L-homocysteine binding site. L-methionine is bound at residue Arg-380.

It belongs to the trans-sulfuration enzymes family. L-methionine gamma-lyase subfamily. As to quaternary structure, homotetramer. Requires pyridoxal 5'-phosphate as cofactor.

The enzyme catalyses L-methionine + H2O = methanethiol + 2-oxobutanoate + NH4(+). It catalyses the reaction L-homocysteine + H2O = 2-oxobutanoate + hydrogen sulfide + NH4(+) + H(+). With respect to regulation, is inhibited in vitro by carbonyl reagents, completely inactivated by DL-propargylglycine, and unaffected by metal-chelating agents. Functionally, catalyzes the alpha,gamma-elimination of L-methionine to produce methanethiol, 2-oxobutanoate and ammonia. May be responsible for the production of methanethiol associated with desirable Cheddar-type sulfur notes during cheese ripening. Is also able to catalyze the alpha,gamma-elimination of L-homocysteine and DL-selenomethionine, but has no activity toward L-cysteine, L-cystathionine, S-adenosyl-L-homocysteine and D-methionine. The polypeptide is L-methionine gamma-lyase (Brevibacterium aurantiacum).